The following is a 499-amino-acid chain: Eukaryotic peptide chain release factor GTP-binding subunit ERF3A (499 aa).

The disordered stretch occupies residues 1-69 (MELSEPIVEN…PKSVVAPPGA (69 aa)). Residues 41 to 50 (RPPEESAHEM) are compositionally biased toward basic and acidic residues. One can recognise a tr-type G domain in the interval 72-298 (KEHVNVVFIG…DNLPNFNRSV (227 aa)). The segment at 81-88 (GHVDAGKS) is G1. 84 to 89 (DAGKST) contributes to the GTP binding site. Positions 137 to 141 (GKTVE) are G2. Residues 158–161 (DAPG) form a G3 region. GTP contacts are provided by residues 220–223 (NKMD) and 262–264 (SGL). The G4 stretch occupies residues 220 to 223 (NKMD). Positions 262 to 264 (SGL) are G5.

Belongs to the TRAFAC class translation factor GTPase superfamily. Classic translation factor GTPase family. ERF3 subfamily. Component of the eRF1-eRF3-GTP ternary complex, composed of ETF1/ERF1 and ERF3 (GSPT1/ERF3A or GSPT2/ERF3B) and GTP. Component of the transient SURF (SMG1-UPF1-eRF1-eRF3) complex. The ETF1-GSPT1 complex interacts with JMJD4. Interacts with PABPC1. Interacts with SHFL.

It catalyses the reaction GTP + H2O = GDP + phosphate + H(+). GTPase component of the eRF1-eRF3-GTP ternary complex, a ternary complex that mediates translation termination in response to the termination codons UAA, UAG and UGA. GSPT1/ERF3A mediates ETF1/ERF1 delivery to stop codons: The eRF1-eRF3-GTP complex binds to a stop codon in the ribosomal A-site. GTP hydrolysis by GSPT1/ERF3A induces a conformational change that leads to its dissociation, permitting ETF1/ERF1 to accommodate fully in the A-site. Component of the transient SURF complex which recruits UPF1 to stalled ribosomes in the context of nonsense-mediated decay (NMD) of mRNAs containing premature stop codons. Required for SHFL-mediated translation termination which inhibits programmed ribosomal frameshifting (-1PRF) of mRNA from viruses and cellular genes. The polypeptide is Eukaryotic peptide chain release factor GTP-binding subunit ERF3A (GSPT1) (Homo sapiens (Human)).